The sequence spans 375 residues: Protein SSUH2 homolog (375 aa).

As to expression, expressed in enterocytes of small and large intestinal mucosa (at protein level). Expressed in chromaffine and interstitial cells. Expressed in peripheral blood and gingival cells.

The protein localises to the cytoplasm. Its subcellular location is the nucleus. In terms of biological role, plays a role in odontogenesis. The chain is Protein SSUH2 homolog from Homo sapiens (Human).